The following is a 338-amino-acid chain: Increasing suppression factor 1 (338 aa).

The segment covering 50 to 70 has biased composition (low complexity); it reads ENSSKSNNSHHSSSTNAGNTS. Residues 50–72 form a disordered region; the sequence is ENSSKSNNSHHSSSTNAGNTSRH. The residue at position 119 (serine 119) is a Phosphoserine. Low complexity predominate over residues 267–306; sequence SLLSNGSSSSPLQTRNNSYSNSLVKSPSNSSLNTSVASSN. Residues 267-322 form a disordered region; the sequence is SLLSNGSSSSPLQTRNNSYSNSLVKSPSNSSLNTSVASSNEESSPHTSNCLEERNP. Positions 307 to 316 are enriched in polar residues; the sequence is EESSPHTSNC.

It belongs to the ISF1/MBR1 family.

Could influence the NAM7/UPF1 function, possibly at the level of mRNA turnover. Participates in mitochondrial biogenesis. In Saccharomyces cerevisiae (strain JAY291) (Baker's yeast), this protein is Increasing suppression factor 1 (ISF1).